A 103-amino-acid chain; its full sequence is Vesicle-associated membrane protein 3 (103 aa).

The disordered stretch occupies residues 1-25 (MSTGVPSGSSAATGSNRRLQQTQNQ). Residues 1–81 (MSTGVPSGSS…KRKYWWKNCK (81 aa)) are Cytoplasmic-facing. In terms of domain architecture, v-SNARE coiled-coil homology spans 18–78 (RLQQTQNQVD…AKLKRKYWWK (61 aa)). Residues Lys-70, Lys-72, and Lys-81 each participate in a glycyl lysine isopeptide (Lys-Gly) (interchain with G-Cter in ubiquitin) cross-link. A helical; Anchor for type IV membrane protein transmembrane segment spans residues 82–102 (MWAIGISVLVIIVIIIIVWCV). Residue Ser-103 is a topological domain, vesicular.

Belongs to the synaptobrevin family. In terms of assembly, interacts with POPDC1 (via the C-terminus cytoplasmic tail). Interacts with BCAP31; involved in VAMP3 export from the endoplasmic reticulum. Interacts with BAIAP3; this interaction is increased in the presence of calcium. Interacts with PICALM. In terms of processing, ubiquitinated by RNF167 at Lys-70, Lys-72 and Lys-81, regulating the recycling endosome pathway. Post-translationally, (Microbial infection) Targeted and hydrolyzed by C.botulinum neurotoxin type D (BoNT/D, botD) which hydrolyzes the 46-Lys-|-Leu-47 bond and probably inhibits neurotransmitter release. (Microbial infection) Targeted and hydrolyzed by C.botulinum neurotoxin type F (BoNT/F, botF) which hydrolyzes the 45-Gln-|-Lys-46 bond and probably inhibits neurotransmitter release. In terms of processing, (Microbial infection) Targeted and hydrolyzed by C.tetani toxin (tetX) which hydrolyzes the 63-Gln-|-Phe-64 bond and probably inhibits neurotransmitter release. As to expression, ubiquitous.

Its subcellular location is the early endosome membrane. The protein resides in the recycling endosome membrane. It localises to the synapse. The protein localises to the synaptosome. Its function is as follows. SNARE involved in vesicular transport from the late endosomes to the trans-Golgi network. This chain is Vesicle-associated membrane protein 3 (Vamp3), found in Rattus norvegicus (Rat).